Here is an 823-residue protein sequence, read N- to C-terminus: Hypoxia-inducible factor 1-alpha (823 aa).

Residues 1-30 (MEGAGGANDKKKISSERRKEKSRDAARSRR) form a disordered region. Residues 1–401 (MEGAGGANDK…KEPDALTLLA (401 aa)) form an interaction with TSGA10 region. A compositionally biased stretch (basic and acidic residues) spans 8–30 (NDKKKISSERRKEKSRDAARSRR). A bHLH domain is found at 17-70 (RRKEKSRDAARSRRSKESEVFYELAHQLPLPHNVSSHLDKASVMRLTISYLRVR). Residues 21–30 (KSRDAARSRR) are DNA-binding. The PAS 1 domain occupies 85 to 158 (KAQMNCFYLK…THRNGLVKKG (74 aa)). The interval 170–191 (RMKCTLTSRGRTMNIKSATWKV) is required for heterodimer formation with ARNT. The PAS 2 domain maps to 228-298 (PHPSNIEIPL…KTHHDMFTKG (71 aa)). Residue Ser-247 is modified to Phosphoserine; by CK1. The 44-residue stretch at 302–345 (TGQYRMLAKRGGYVWIETQATVIYNTKNSQPQCIVCVNYVVSGI) folds into the PAC domain. Positions 401-600 (APAAGDTIIS…QSASTNTVFQ (200 aa)) are ODD. Pro-402 is modified (4-hydroxyproline). Residues 494 to 517 (IQDQPASPSDGSTRQSSPEPNSPS) show a composition bias toward polar residues. A disordered region spans residues 494–521 (IQDQPASPSDGSTRQSSPEPNSPSEYCF). The NTAD stretch occupies residues 531–575 (FKLELVEKLFAEDTEAKNPFSTQDTDLDLEMLAPYIPMDDDFQLR). An N6-acetyllysine; alternate modification is found at Lys-532. Lys-532 participates in a covalent cross-link: Glycyl lysine isopeptide (Lys-Gly) (interchain with G-Cter in ubiquitin); alternate. Residues Lys-538 and Lys-547 each participate in a glycyl lysine isopeptide (Lys-Gly) (interchain with G-Cter in ubiquitin) cross-link. At Ser-551 the chain carries Phosphoserine; by GSK3-beta. Thr-555 bears the Phosphothreonine; by GSK3-beta mark. Residue Pro-564 is modified to 4-hydroxyproline. Ser-576 carries the phosphoserine; by PLK3 modification. The segment at 576–782 (SFDQLSPLEN…SDLACRLLGQ (207 aa)) is ID. Disordered regions lie at residues 581–602 (SPLE…FQPT) and 639–685 (PSPP…PRSP). Ser-589 bears the Phosphoserine; by GSK3-beta mark. Residues 651-666 (ATTSPYSDTGSRTASP) show a composition bias toward polar residues. Residue Ser-654 is modified to Phosphoserine; by PLK3. Lys-706 is modified (N6-acetyllysine). The Nuclear localization signal motif lies at 715 to 721 (RKRKIEH). The interval 783-823 (SMDESGLPQLTSYDCEVNAPIQGSRNLLQGEELLRALDQVN) is CTAD. S-nitrosocysteine is present on Cys-797. A (3S)-3-hydroxyasparagine modification is found at Asn-800.

Interacts with the ARNT; forms a heterodimer that binds core DNA sequence 5'-TACGTG-3' within the hypoxia response element (HRE) of target gene promoters. Interacts with COPS5; the interaction increases the transcriptional activity of HIF1A through increased stability. Interacts with EP300 (via TAZ-type 1 domains); the interaction is stimulated in response to hypoxia and inhibited by CITED2. Interacts with CREBBP (via TAZ-type 1 domains). Interacts with NCOA1, NCOA2, APEX1 and HSP90. Interacts (hydroxylated within the ODD domain) with VHLL (via beta domain); the interaction, leads to polyubiquitination and subsequent HIF1A proteasomal degradation. During hypoxia, sumoylated HIF1A also binds VHL; the interaction promotes the ubiquitination of HIF1A. Interacts with SENP1; the interaction desumoylates HIF1A resulting in stabilization and activation of transcription. Interacts (via the ODD domain) with NAA10; the interaction appears not to acetylate HIF1A nor have any affect on protein stability, during hypoxia. Interacts with RWDD3; the interaction enhances HIF1A sumoylation. Interacts with TSGA10. Interacts with HIF3A. Interacts with RORA (via the DNA binding domain); the interaction enhances HIF1A transcription under hypoxia through increasing protein stability. Interaction with PSMA7 inhibits the transactivation activity of HIF1A under both normoxic and hypoxia-mimicking conditions. Interacts with USP20. Interacts with RACK1; promotes HIF1A ubiquitination and proteasome-mediated degradation. Interacts (via N-terminus) with USP19. Interacts with SIRT2. Interacts (deacetylated form) with EGLN1. Interacts with CBFA2T3. Interacts with HSP90AA1 and HSP90AB1. Interacts with DCUN1D1; this interaction increases the interaction between VHL and DCUN1D1. Interacts with HIF1AN. S-nitrosylation of Cys-797 may be responsible for increased recruitment of p300 coactivator necessary for transcriptional activity of HIF-1 complex. Post-translationally, acetylation of Lys-532 by ARD1 increases interaction with VHL and stimulates subsequent proteasomal degradation. Deacetylation of Lys-706 by SIRT2 increases its interaction with and hydroxylation by EGLN1 thereby inactivating HIF1A activity by inducing its proteasomal degradation. In terms of processing, ubiquitinated; in normoxia, following hydroxylation and interaction with VHL. Lys-532 appears to be the principal site of ubiquitination. Clioquinol, the Cu/Zn-chelator, inhibits ubiquitination through preventing hydroxylation at Asn-800. Ubiquitinated by E3 ligase VHL. Deubiquitinated by UCHL1. Requires phosphorylation for DNA-binding. Phosphorylation at Ser-247 by CSNK1D/CK1 represses kinase activity and impairs ARNT binding. Phosphorylation by GSK3-beta and PLK3 promote degradation by the proteasome. Post-translationally, the iron and 2-oxoglutarate dependent 3-hydroxylation of asparagine is (S) stereospecific within HIF CTAD domains. In terms of processing, sumoylated; with SUMO1 under hypoxia. Sumoylation is enhanced through interaction with RWDD3. Both sumoylation and desumoylation seem to be involved in the regulation of its stability during hypoxia. Sumoylation can promote either its stabilization or its VHL-dependent degradation by promoting hydroxyproline-independent HIF1A-VHL complex binding, thus leading to HIF1A ubiquitination and proteasomal degradation. Desumoylation by SENP1 increases its stability amd transcriptional activity. There is a disaccord between various publications on the effect of sumoylation and desumoylation on its stability and transcriptional activity. In normoxia, is hydroxylated on Pro-402 and Pro-564 in the oxygen-dependent degradation domain (ODD) by EGLN1/PHD2 and EGLN2/PHD1. EGLN3/PHD3 has also been shown to hydroxylate Pro-564. The hydroxylated prolines promote interaction with VHL, initiating rapid ubiquitination and subsequent proteasomal degradation. Deubiquitinated by USP20. Under hypoxia, proline hydroxylation is impaired and ubiquitination is attenuated, resulting in stabilization. In normoxia, is hydroxylated on Asn-800 by HIF1AN, thus abrogating interaction with CREBBP and EP300 and preventing transcriptional activation. Repressed by iron ion, via Fe(2+) prolyl hydroxylase (PHD) enzymes-mediated hydroxylation and subsequent proteasomal degradation.

The protein resides in the cytoplasm. It is found in the nucleus. Induced by reactive oxygen species (ROS). In terms of biological role, functions as a master transcriptional regulator of the adaptive response to hypoxia. Under hypoxic conditions, activates the transcription of over 40 genes, including erythropoietin, glucose transporters, glycolytic enzymes, vascular endothelial growth factor, HILPDA, and other genes whose protein products increase oxygen delivery or facilitate metabolic adaptation to hypoxia. Plays an essential role in embryonic vascularization, tumor angiogenesis and pathophysiology of ischemic disease. Heterodimerizes with ARNT; heterodimer binds to core DNA sequence 5'-TACGTG-3' within the hypoxia response element (HRE) of target gene promoters. Activation requires recruitment of transcriptional coactivators such as CREBBP and EP300. Activity is enhanced by interaction with NCOA1 and/or NCOA2. Interaction with redox regulatory protein APEX1 seems to activate CTAD and potentiates activation by NCOA1 and CREBBP. Involved in the axonal distribution and transport of mitochondria in neurons during hypoxia. The chain is Hypoxia-inducible factor 1-alpha (HIF1A) from Bos taurus (Bovine).